A 387-amino-acid polypeptide reads, in one-letter code: MNRWLLPEDITDVMPAEACKVESLRRAVLDLYQSYGYELVAPPILEFLDSLLTGTGSDLNLQTFKLVDQLSGRTLGLRADMTPQVARIDAHLLNRADVTRLCYAGSVAHARTPVGSSAREELQLGAEIYGCATWEADLEAITLLLKTLSVAGLEKVYLDLSHAGILAGILDGQSLDKETIEALYGLLQSKDRPRLGEWSTCLPENVAKALVALIELNGPCAEVLAKAKKELPKHAAIDKALADLERLVSAAANLSANVELSIDLADLRGYQYHSGVMFAAYVDRLPQPIARGGRYDHVGQAFGRPRPATGFSLDLLTLANLSPLNVRKMAITAPWVEDAELSKAIAALRDKGEVVIQVLAGTTLEAAEYQCDRELVKQGSSWEVKKK.

Belongs to the class-II aminoacyl-tRNA synthetase family. HisZ subfamily. Heteromultimer composed of HisG and HisZ subunits.

The protein resides in the cytoplasm. The protein operates within amino-acid biosynthesis; L-histidine biosynthesis; L-histidine from 5-phospho-alpha-D-ribose 1-diphosphate: step 1/9. Functionally, required for the first step of histidine biosynthesis. May allow the feedback regulation of ATP phosphoribosyltransferase activity by histidine. The protein is ATP phosphoribosyltransferase regulatory subunit of Polynucleobacter necessarius subsp. necessarius (strain STIR1).